We begin with the raw amino-acid sequence, 123 residues long: uncharacterized protein (123 aa).

A helical transmembrane segment spans residues 34 to 53 (LPFFFLFLGNLGKFFFLWPL).

The protein localises to the membrane. This is an uncharacterized protein from Saccharomyces cerevisiae (strain ATCC 204508 / S288c) (Baker's yeast).